A 451-amino-acid polypeptide reads, in one-letter code: GTPase Der (451 aa).

EngA-type G domains are found at residues 5 to 170 (PVVA…VEPE) and 186 to 359 (IKLA…AAAF). Residues 11-18 (GRPNVGKS), 58-62 (DTGGF), 122-125 (NKAE), 192-199 (GRPNVGKS), 239-243 (DTAGL), and 304-307 (NKWD) contribute to the GTP site. Residues 360–444 (AKLSTPKLTR…PLRIEFKSSR (85 aa)) form the KH-like domain.

The protein belongs to the TRAFAC class TrmE-Era-EngA-EngB-Septin-like GTPase superfamily. EngA (Der) GTPase family. As to quaternary structure, associates with the 50S ribosomal subunit.

In terms of biological role, GTPase that plays an essential role in the late steps of ribosome biogenesis. In Bordetella petrii (strain ATCC BAA-461 / DSM 12804 / CCUG 43448), this protein is GTPase Der.